The sequence spans 916 residues: Protein translocase subunit SecA (916 aa).

Residues glutamine 87, 105–109 (GEGKT), and aspartate 507 contribute to the ATP site. Positions 900, 902, 911, and 912 each coordinate Zn(2+).

The protein belongs to the SecA family. Monomer and homodimer. Part of the essential Sec protein translocation apparatus which comprises SecA, SecYEG and auxiliary proteins SecDF-YajC and YidC. The cofactor is Zn(2+).

The protein localises to the cell inner membrane. The protein resides in the cytoplasm. It carries out the reaction ATP + H2O + cellular proteinSide 1 = ADP + phosphate + cellular proteinSide 2.. Part of the Sec protein translocase complex. Interacts with the SecYEG preprotein conducting channel. Has a central role in coupling the hydrolysis of ATP to the transfer of proteins into and across the cell membrane, serving both as a receptor for the preprotein-SecB complex and as an ATP-driven molecular motor driving the stepwise translocation of polypeptide chains across the membrane. This chain is Protein translocase subunit SecA, found in Neisseria meningitidis serogroup C (strain 053442).